A 95-amino-acid chain; its full sequence is MRKYEIMYIIAPNLEESANKEIIERYNKVLTDNGAEILKVDEIGKKRLAYEINDFKDGFYVLLSVQANTEAINEFNRLIKINDNVIRVLVTKDEQ.

The protein belongs to the bacterial ribosomal protein bS6 family.

In terms of biological role, binds together with bS18 to 16S ribosomal RNA. This is Small ribosomal subunit protein bS6 from Shouchella clausii (strain KSM-K16) (Alkalihalobacillus clausii).